The chain runs to 259 residues: 5'-nucleotidase SurE (259 aa).

Residues Asp8, Asp9, Ser40, and Asn92 each contribute to the a divalent metal cation site.

This sequence belongs to the SurE nucleotidase family. A divalent metal cation serves as cofactor.

It localises to the cytoplasm. The enzyme catalyses a ribonucleoside 5'-phosphate + H2O = a ribonucleoside + phosphate. Functionally, nucleotidase that shows phosphatase activity on nucleoside 5'-monophosphates. The protein is 5'-nucleotidase SurE of Xanthomonas oryzae pv. oryzae (strain MAFF 311018).